The chain runs to 415 residues: Esterase FrsA (415 aa).

It belongs to the FrsA family. As to quaternary structure, monomer in solution. Homodimer. Forms a 1:1 complex with the unphosphorylated form of the EIIA component of the glucose-specific PTS system (IIAGlc).

It carries out the reaction a carboxylic ester + H2O = an alcohol + a carboxylate + H(+). Its function is as follows. Catalyzes the hydrolysis of esters. In vitro, prefers short chain alkanoate ester as substrate. Displays highest activity towards p-nitrophenyl acetate (pNPA). Has weaker activity towards p-nitrophenyl butyrate (pNPB). This Vibrio vulnificus (strain CMCP6) protein is Esterase FrsA.